The primary structure comprises 390 residues: Zinc transporter 7-B (390 aa).

Over 1-37 (MLPLSIKDDEYKPPKFNLVRKVSGWIRSIFSDSTSRN) the chain is Cytoplasmic. A helical transmembrane segment spans residues 38–58 (LFCFLCLNLSFAFVELFYGIW). The Lumenal segment spans residues 59–67 (SNSLGLISD). Residues 68–88 (SFHMFFDCTALLAGLAASVIS) form a helical membrane-spanning segment. At 89–102 (RWKTNETFSYGYVR) the chain is on the cytoplasmic side. A helical transmembrane segment spans residues 103-123 (AEVLAGFVNGLFLIFTAFFIF). Over 124-140 (SEGIERALDTPEVHHER) the chain is Lumenal. The chain crosses the membrane as a helical span at residues 141-161 (LLPVSIMGFLVNLIGIFVFQH). Residues 161 to 226 (HGGGHGHSHE…GHDHSHKHGH (66 aa)) are his-rich loop. Residues 162-250 (GGGHGHSHES…KGSSKQILEG (89 aa)) are Cytoplasmic-facing. Positions 166 to 243 (GHSHESGHGH…DEPPEENKGS (78 aa)) are disordered. The segment covering 187–201 (GHSHSHGGGHGHSHG) has biased composition (basic residues). Basic and acidic residues-rich tracts occupy residues 202 to 218 (GGHE…EHGH) and 232 to 242 (CHDEPPEENKG). A helical transmembrane segment spans residues 251–271 (VFLHIVADALGSVGVIISTIL). Residues 272-276 (MQQYG) lie on the Lumenal side of the membrane. The helical transmembrane segment at 277 to 297 (LMIADPICSMLIALLIFVSVI) threads the bilayer. The Cytoplasmic segment spans residues 298 to 390 (PLLKQSIGIL…LYVQIDLAAM (93 aa)).

The protein belongs to the cation diffusion facilitator (CDF) transporter (TC 2.A.4) family. SLC30A subfamily. In terms of assembly, homooligomer.

It is found in the golgi apparatus membrane. It localises to the cytoplasmic vesicle. The protein localises to the golgi apparatus. Its subcellular location is the trans-Golgi network. The protein resides in the sarcoplasmic reticulum. It is found in the mitochondrion. The catalysed reaction is Zn(2+)(in) = Zn(2+)(out). Functionally, zinc ion transporter mediating zinc entry from the cytosol into the lumen of organelles along the secretory pathway. By contributing to zinc ion homeostasis within the early secretory pathway, regulates the activation and folding of enzymes like alkaline phosphatases. In Xenopus laevis (African clawed frog), this protein is Zinc transporter 7-B (slc30a7-b).